We begin with the raw amino-acid sequence, 315 residues long: tRNA uridine(34) hydroxylase (315 aa).

In terms of domain architecture, Rhodanese spans 122–223; it reads SDPDVLVIDT…YLEQIPQPES (102 aa). C183 functions as the Cysteine persulfide intermediate in the catalytic mechanism.

This sequence belongs to the TrhO family.

It catalyses the reaction uridine(34) in tRNA + AH2 + O2 = 5-hydroxyuridine(34) in tRNA + A + H2O. Its function is as follows. Catalyzes oxygen-dependent 5-hydroxyuridine (ho5U) modification at position 34 in tRNAs. The chain is tRNA uridine(34) hydroxylase from Caulobacter vibrioides (strain ATCC 19089 / CIP 103742 / CB 15) (Caulobacter crescentus).